Here is a 248-residue protein sequence, read N- to C-terminus: Pulmonary surfactant-associated protein A (248 aa).

An N-terminal signal peptide occupies residues 1–20; sequence MSLCSLAFTLFLTVVAGIKC. Positions 28-100 constitute a Collagen-like domain; sequence GSPGIPGAPG…PGERGLPGFP (73 aa). 10 positions are modified to 4-hydroxyproline: Pro30, Pro33, Pro36, Pro42, Pro54, Pro57, Pro63, Pro67, Pro70, and Pro76. A disordered region spans residues 31–99; sequence GIPGAPGNHG…EPGERGLPGF (69 aa). The span at 42-51 shows a compositional bias: basic and acidic residues; sequence PGRDGRDGVK. Residues 54-65 are compositionally biased toward pro residues; sequence PGPPGPMGPPGG. The segment covering 69-82 has biased composition (low complexity); that stretch reads LPGRDGLPGAPGAP. Residues 84–93 show a composition bias toward basic and acidic residues; it reads ERGDKGEPGE. Positions 133–248 constitute a C-type lectin domain; it reads SVGDKVFSTN…LQYRLAVCEF (116 aa). 2 cysteine pairs are disulfide-bonded: Cys155–Cys246 and Cys224–Cys238. A glycan (N-linked (GlcNAc...) asparagine) is linked at Asn207. Residues Glu215, Arg217, Asn234, and Asp235 each contribute to the Ca(2+) site.

This sequence belongs to the SFTPA family. In terms of assembly, oligomeric complex of 6 set of homotrimers.

The protein localises to the secreted. The protein resides in the extracellular space. Its subcellular location is the extracellular matrix. It localises to the surface film. Its function is as follows. In presence of calcium ions, it binds to surfactant phospholipids and contributes to lower the surface tension at the air-liquid interface in the alveoli of the mammalian lung and is essential for normal respiration. Enhances the expression of MYO18A/SP-R210 on alveolar macrophages. The polypeptide is Pulmonary surfactant-associated protein A (Sftpa1) (Rattus norvegicus (Rat)).